A 136-amino-acid chain; its full sequence is Cytokine-like protein 1 (136 aa).

Residues methionine 1–proline 22 form the signal peptide.

In terms of tissue distribution, specifically expressed in CD34+ hematopoietic cells.

The protein localises to the secreted. This is Cytokine-like protein 1 (CYTL1) from Homo sapiens (Human).